A 485-amino-acid chain; its full sequence is D-alanine--D-alanyl carrier protein ligase (485 aa).

Residue 144 to 145 participates in ATP binding; it reads TS. Position 189 (Asp-189) interacts with D-alanine. Residue 284–289 coordinates ATP; sequence NTYGPT. Val-293 is a binding site for D-alanine. Asp-365 and Lys-473 together coordinate ATP. Residue Lys-473 participates in D-alanine binding.

This sequence belongs to the ATP-dependent AMP-binding enzyme family. DltA subfamily.

The protein resides in the cytoplasm. It catalyses the reaction holo-[D-alanyl-carrier protein] + D-alanine + ATP = D-alanyl-[D-alanyl-carrier protein] + AMP + diphosphate. It participates in cell wall biogenesis; lipoteichoic acid biosynthesis. In terms of biological role, catalyzes the first step in the D-alanylation of lipoteichoic acid (LTA), the activation of D-alanine and its transfer onto the D-alanyl carrier protein (Dcp) DltC. In an ATP-dependent two-step reaction, forms a high energy D-alanyl-AMP intermediate, followed by transfer of the D-alanyl residue as a thiol ester to the phosphopantheinyl prosthetic group of the Dcp. D-alanylation of LTA plays an important role in modulating the properties of the cell wall in Gram-positive bacteria, influencing the net charge of the cell wall. The protein is D-alanine--D-alanyl carrier protein ligase of Staphylococcus aureus (strain bovine RF122 / ET3-1).